Here is a 97-residue protein sequence, read N- to C-terminus: Co-chaperonin GroES (97 aa).

Belongs to the GroES chaperonin family. As to quaternary structure, heptamer of 7 subunits arranged in a ring. Interacts with the chaperonin GroEL.

Its subcellular location is the cytoplasm. Together with the chaperonin GroEL, plays an essential role in assisting protein folding. The GroEL-GroES system forms a nano-cage that allows encapsulation of the non-native substrate proteins and provides a physical environment optimized to promote and accelerate protein folding. GroES binds to the apical surface of the GroEL ring, thereby capping the opening of the GroEL channel. The polypeptide is Co-chaperonin GroES (Pseudomonas fluorescens (strain Pf0-1)).